Reading from the N-terminus, the 324-residue chain is MSIYDDILKQFPTIDEWSDSDQKIMLEPYTYLGINTAKELPSMVTKALNHWYQVPQPALDIVLQIVGPIHAACLLIDDIQDDSDLRGGNPVAHKVYGVAQTINTATYVCFDAYHKISELRPFLKSPETIDLWSIINDEIAALHRGQWIDLYWRDSLICPTEEEYLRMIHNKTGAIFRLPMRLLQALSPVDSVPDCFPLVNIVGILVQIRNDLLSLSADFTKDKGFCEDFSEGKFSFPIIHSVKADSSNSLLMDILRLRPKDEATKMKALRYMKDQTKSLDHTFDVLCKLEKTAKQELEKLGGNSELSSIFERIHLSPTPEIEDH.

Mg(2+) contacts are provided by Asp77 and Asp81.

Belongs to the FPP/GGPP synthase family. It depends on Mg(2+) as a cofactor.

It catalyses the reaction (2E)-geranyl diphosphate = (E)-beta-ocimene + diphosphate. It carries out the reaction (2E)-geranyl diphosphate + H2O = linalool + diphosphate. The catalysed reaction is (2E,6E)-farnesyl diphosphate = (3E,6E)-alpha-farnesene + diphosphate. The enzyme catalyses (2E,6E,10E)-geranylgeranyl diphosphate = (E,E,E)-alpha-springene + diphosphate. Terpene synthase that shows monoterpene synthase activity and produces (E)-beta-ocimene as a major product and linalool as a minor product, using geranyl diphosphate (GPP) as substrate. Also shows sesquiterpene synthase activity as it is able to convert farnesyl diphosphate (FPP) into (E,E)-alpha-farnesene. Finally, TPS1 can convert geranylgeranyl diphosphate into (E,E,E)-alpha-springene. The polypeptide is IDS-like terpene synthase 1 (Melampsora larici-populina (strain 98AG31 / pathotype 3-4-7) (Poplar leaf rust fungus)).